Consider the following 152-residue polypeptide: Ninjurin-1 (152 aa).

At Met1 the chain carries N-acetylmethionine. Residues Met1 to Leu10 show a composition bias toward acidic residues. The tract at residues Met1–Trp29 is disordered. At Met1–Val78 the chain is on the extracellular side. Ser18 and Ser21 each carry phosphoserine. Positions Pro26–Asn37 are N-terminal adhesion motif. The interval His40–Glu69 is required to induce plasma membrane rupture. Positions Lys44 to Ala55 are helix alpha1. The helix alpha2 stretch occupies residues Met58–Phe74. A glycan (N-linked (GlcNAc...) asparagine) is linked at Asn60. The helical transmembrane segment at Pro79–Lys103 threads the bilayer. Residues Tyr104–Ala113 are Cytoplasmic-facing. Residues Lys114–Ala138 traverse the membrane as a helical segment. Topologically, residues Phe139–Gln152 are extracellular.

The protein belongs to the ninjurin family. As to quaternary structure, homodimer; in absence of death stimuli, forms an inactive homodimer. Homooligomer; in response to death stimuli, homooligomerizes into long, highly branched filaments and large, ring-shaped structures in the membrane. In terms of processing, cleaved by MMP9 protease to generate the Secreted ninjurin-1 form. Post-translationally, N-linked glycosylation is required for homooligomerization.

It is found in the cell membrane. It localises to the synaptic cell membrane. The protein resides in the secreted. Its activity is regulated as follows. In response to death stimuli, homooligomerizes and disrupts membrane integrity by introducing the hydrophilic faces of alpha1 and alpha2 helices into the hydrophobic membrane. Homooligomerization and ability to mediate plasma membrane rupture is inhibited by glycine; it is unclear whether glycine directly or indirectly inhibits homooligomerization. In normal conditions, NINJ1 is autoinhibited via formation of a homodimer: in the inactive homodimer, the alpha1 and alpha2 helices (residues 44-74) form a single transmembrane region without a kink, in which hydrophilic faces of alpha1 and alpha2 helices are sequestered. Functionally, effector of various programmed cell death, such as pyroptosis and necroptosis, which mediates plasma membrane rupture (cytolysis). Oligomerizes in response to death stimuli and forms ring-like structures on the plasma membrane: acts by cutting and shedding membrane disks, like a cookie cutter, leading to membrane damage and loss that cannot be repaired by the cell. Plasma membrane rupture leads to release intracellular molecules named damage-associated molecular patterns (DAMPs) that propagate the inflammatory response. Mechanistically, mediates plasma membrane rupture by introducing hydrophilic faces of 2 alpha helices into the hydrophobic membrane. Induces plasma membrane rupture downstream of Gasdermin (GSDMA, GSDMB, GSDMC, GSDMD, or GSDME) or MLKL during pyroptosis or necroptosis, respectively. Acts as an effector of PANoptosis downstream of CASP1, CASP4, CASP8 and RIPK3. Also induces plasma membrane rupture in response to cell swelling caused by osmotic stress and ferroptosis downstream of lipid peroxidation. Acts as a regulator of Toll-like receptor 4 (TLR4) signaling triggered by lipopolysaccharide (LPS) during systemic inflammation; directly binds LPS. Involved in leukocyte migration during inflammation by promoting transendothelial migration of macrophages via homotypic binding. Promotes the migration of monocytes across the brain endothelium to central nervous system inflammatory lesions. Also acts as a homophilic transmembrane adhesion molecule involved in various processes such as axonal growth, cell chemotaxis and angiogenesis. Promotes cell adhesion by mediating homophilic interactions via its extracellular N-terminal adhesion motif (N-NAM). Involved in the progression of the inflammatory stress by promoting cell-to-cell interactions between immune cells and endothelial cells. Plays a role in nerve regeneration by promoting maturation of Schwann cells. Acts as a regulator of angiogenesis. Promotes the formation of new vessels by mediating the interaction between capillary pericyte cells and endothelial cells. Also mediates vascular functions in penile tissue as well as vascular formation. Promotes osteoclasts development by enhancing the survival of prefusion osteoclasts. Also involved in striated muscle growth and differentiation. Also involved in cell senescence in a p53/TP53 manner, possibly by acting as an indirect regulator of p53/TP53 mRNA translation. Its function is as follows. Secreted form generated by cleavage, which has chemotactic activity. Acts as an anti-inflammatory mediator by promoting monocyte recruitment, thereby ameliorating atherosclerosis. The protein is Ninjurin-1 of Mus musculus (Mouse).